We begin with the raw amino-acid sequence, 555 residues long: Glucose-6-phosphate isomerase (555 aa).

E353 acts as the Proton donor in catalysis. Residues H384 and K516 contribute to the active site.

The protein belongs to the GPI family.

The protein resides in the cytoplasm. The catalysed reaction is alpha-D-glucose 6-phosphate = beta-D-fructose 6-phosphate. Its pathway is carbohydrate biosynthesis; gluconeogenesis. It functions in the pathway carbohydrate degradation; glycolysis; D-glyceraldehyde 3-phosphate and glycerone phosphate from D-glucose: step 2/4. Its function is as follows. Catalyzes the reversible isomerization of glucose-6-phosphate to fructose-6-phosphate. This Methylobacillus flagellatus (strain ATCC 51484 / DSM 6875 / VKM B-1610 / KT) protein is Glucose-6-phosphate isomerase.